The chain runs to 556 residues: Potassium-transporting ATPase potassium-binding subunit (556 aa).

10 consecutive transmembrane segments (helical) span residues 6 to 26 (AGIA…VPLG), 65 to 85 (SVLA…LVQG), 133 to 153 (GLAV…IALV), 176 to 196 (LRIL…GGAI), 249 to 269 (PTPW…FSLP), 283 to 303 (VAIA…TMLL), 378 to 398 (GLYG…LMVG), 415 to 435 (LAAS…AIAM), 483 to 503 (ALGL…LALA), and 526 to 546 (FVGM…LPIL).

It belongs to the KdpA family. In terms of assembly, the system is composed of three essential subunits: KdpA, KdpB and KdpC.

It localises to the cell membrane. Functionally, part of the high-affinity ATP-driven potassium transport (or Kdp) system, which catalyzes the hydrolysis of ATP coupled with the electrogenic transport of potassium into the cytoplasm. This subunit binds the extracellular potassium ions and delivers the ions to the membrane domain of KdpB through an intramembrane tunnel. The chain is Potassium-transporting ATPase potassium-binding subunit from Mycolicibacterium smegmatis (strain ATCC 700084 / mc(2)155) (Mycobacterium smegmatis).